Reading from the N-terminus, the 1321-residue chain is Adhesion G protein-coupled receptor A3 (1321 aa).

A signal peptide spans 1-33 (MEPPGRRRGRAQPPLLLPLSLLALLALLGGGGG). Residues 34-761 (GGAAALPAGC…YTQAASLLHP (728 aa)) lie on the Extracellular side of the membrane. Asn-81 and Asn-98 each carry an N-linked (GlcNAc...) asparagine glycan. LRR repeat units lie at residues 82 to 103 (RTVT…SFSG), 106 to 127 (LLER…AFWG), 130 to 151 (SLKR…IFRG), and 154 to 175 (NLVR…TFDY). Asn-159, Asn-206, Asn-301, Asn-332, Asn-433, Asn-453, and Asn-592 each carry an N-linked (GlcNAc...) asparagine glycan. Positions 187–237 (EYLLCDCNILWMHRWVKEKNITVRDTRCVYPKSLQAQPVTGVKQELLTCDP) constitute an LRRCT domain. The 99-residue stretch at 242-340 (PSFYMTPSHR…GNNTRTVDIV (99 aa)) folds into the Ig-like domain. A disulfide bridge links Cys-264 with Cys-324. Residues 583–750 (LDKQLSFKCN…AVLMDLTGSE (168 aa)) enclose the GAIN-B domain. Residues 594–620 (SNTFSSLALKNTIVEASIQLPPSLFSP) form an LRR 5 repeat. N-linked (GlcNAc...) asparagine glycosylation is found at Asn-652, Asn-687, and Asn-728. The tract at residues 701–750 (AARWDFDLLNGQGGWKSDGCHILYSDENITTIQCYSLSNYAVLMDLTGSE) is GPS. The cysteines at positions 720 and 734 are disulfide-linked. Residues 762–782 (VVYTTAIILLLCLLAVIVSYI) traverse the membrane as a helical segment. Topologically, residues 783-796 (YHHSLIRISLKSWH) are cytoplasmic. Residues 797–817 (MLVNLCFHIFLTCVVFVGGIT) traverse the membrane as a helical segment. The Extracellular segment spans residues 818-826 (QTRNASICQ). Asn-821 carries an N-linked (GlcNAc...) asparagine glycan. Residues 827 to 847 (AVGIILHYSTLATVLWVGVTA) form a helical membrane-spanning segment. Topologically, residues 848–876 (RNIYKQVTKKAKRCQDPDEPPPPPRPMLR) are cytoplasmic. A helical membrane pass occupies residues 877 to 897 (FYLIGGGIPIIVCGITAAANI). At 898–919 (KNYGSRPNAPYCWMAWEPSLGA) the chain is on the extracellular side. Residues 920-940 (FYGPASFITFVNCMYFLSIFI) form a helical membrane-spanning segment. The Cytoplasmic portion of the chain corresponds to 941–996 (QLKRHPERKYELKEPTEEQQRLAANENGEINHQDSMSLSLISTSALENEHTFHSQL). The chain crosses the membrane as a helical span at residues 997 to 1017 (LGASLTLLLYVALWMFGALAV). Topologically, residues 1018–1024 (SLYYPLD) are extracellular. The helical transmembrane segment at 1025 to 1045 (LVFSFVFGATSLSFSAFFVVH) threads the bilayer. Residues 1046 to 1321 (HCVNREDVRL…TGLWKHETTV (276 aa)) lie on the Cytoplasmic side of the membrane. The span at 1073-1083 (NVQPPNSNGTN) shows a compositional bias: polar residues. Disordered regions lie at residues 1073-1094 (NVQP…NSSA), 1198-1219 (VEGS…GHSR), 1231-1265 (QYNP…KKDA), and 1294-1321 (SNGQ…ETTV). The span at 1233–1250 (NPPQQDSSDACSTLPKSS) shows a compositional bias: polar residues. A PDZ-binding motif is present at residues 1319-1321 (TTV).

This sequence belongs to the G-protein coupled receptor 2 family. Adhesion G-protein coupled receptor (ADGR) subfamily. As to quaternary structure, interacts (via PDZ-binding motif) with DLG1.

It localises to the membrane. Functionally, orphan receptor that may have a role in planar cell polarity pathway. This Homo sapiens (Human) protein is Adhesion G protein-coupled receptor A3.